A 329-amino-acid chain; its full sequence is DNA-directed RNA polymerase subunit alpha (329 aa).

The segment at 1–231 is alpha N-terminal domain (alpha-NTD); that stretch reads MQTNLLKPKT…EQLAVFAQLE (231 aa). Residues 249 to 329 form an alpha C-terminal domain (alpha-CTD) region; that stretch reads FDPILLRPVD…SWPPAGLDKR (81 aa).

It belongs to the RNA polymerase alpha chain family. In terms of assembly, homodimer. The RNAP catalytic core consists of 2 alpha, 1 beta, 1 beta' and 1 omega subunit. When a sigma factor is associated with the core the holoenzyme is formed, which can initiate transcription.

The catalysed reaction is RNA(n) + a ribonucleoside 5'-triphosphate = RNA(n+1) + diphosphate. DNA-dependent RNA polymerase catalyzes the transcription of DNA into RNA using the four ribonucleoside triphosphates as substrates. This chain is DNA-directed RNA polymerase subunit alpha, found in Polaromonas sp. (strain JS666 / ATCC BAA-500).